We begin with the raw amino-acid sequence, 462 residues long: MTTNKTFSMVLAMTLNGGIGYQNRLPWKLKEDLQRFKKITTGGIVIMGRKTFESMNSKPLPNRVNVVISKNMKSSNEVQVFPRIEDALQFYNTSHQKLYLIGGKRIFEEGLATDKCSDVHLTRIGVETKCDVYLNKNIFSTFQVNKTSQTKSENGINYDYQHLINKNSHEQSYIDEEHQENQYLDMITKIMKEGVSKDDRTGVGTMSIFGQTMRFNLAQSFPLLTTKKVFFRGVVEELLWFLRGNTNGKLLLDKGVKIWEGNGTREYLDTIGLQHRQEHDLGPVYGFQWRHFGAKYKDCQTDYSNQGVDQVKEIIQLLKNNPDSRRIILSAWNPIDLKQMALPPCHVMSQFFVANGKLSCMMYQRSCDFGLGIPFNIASYALLTYMLAKECNLNLGEFVHVLGDTHIYSNHVEALKKQIERVPYPFPLLKIKGNKSLFDYTYEDFELVGYNAHDKIEMKMAV.

One can recognise a DHFR domain in the interval 6–165; sequence TFSMVLAMTL…INYDYQHLIN (160 aa). Substrate is bound at residue Val-10. NADP(+)-binding positions include Ala-12 and 18–24; that span reads GIGYQNR. Asp-32 is a binding site for substrate. Residues 49 to 51 and 68 to 71 contribute to the NADP(+) site; these read RKT and ISKN. Ile-101 lines the substrate pocket. 102-109 provides a ligand contact to NADP(+); that stretch reads GGKRIFEE. Thr-122 lines the substrate pocket. Positions 180 to 462 are thymidylate synthase; sequence ENQYLDMITK…HDKIEMKMAV (283 aa). Arg-200 provides a ligand contact to dUMP. Residue Cys-345 is part of the active site. DUMP is bound by residues His-346, 364–368, Asn-376, and 406–408; these read QRSCD and HIY.

In the N-terminal section; belongs to the dihydrofolate reductase family. It in the C-terminal section; belongs to the thymidylate synthase family.

It carries out the reaction (6S)-5,6,7,8-tetrahydrofolate + NADP(+) = 7,8-dihydrofolate + NADPH + H(+). The enzyme catalyses dUMP + (6R)-5,10-methylene-5,6,7,8-tetrahydrofolate = 7,8-dihydrofolate + dTMP. The protein operates within cofactor biosynthesis; tetrahydrofolate biosynthesis; 5,6,7,8-tetrahydrofolate from 7,8-dihydrofolate: step 1/1. Functionally, bifunctional enzyme. Involved in de novo dTMP biosynthesis. Key enzyme in folate metabolism. Catalyzes an essential reaction for de novo glycine and purine synthesis, DNA precursor synthesis, and for the conversion of dUMP to dTMP. The protein is Bifunctional dihydrofolate reductase-thymidylate synthase of Paramecium tetraurelia.